The primary structure comprises 494 residues: MEHHAVEFTAQHLIALLPLLVTCMSAIVVMLAIAARRNHALTFVLTVLGLNLALLSLLPAMGVAPLEVTALLQIDRFAGYYMALVLAASLACVTLTHAYLGGQSGKGYPGNREELYLLILLSAAGGLVLASAQHLVGLFIGLELLSVPTYGMIAYAFFNKRSLEAGIKYMVLSAAGSAFLLFGMALLYAEAGDMGFRAIGASLAQGSSLLVELGIGMMLIGLAFKLSLVPFHLWTPDVYEGAPAPVAAFLATASKVAVFAVLLRLYQISPATAGGWLNELLTLIAIASILFGNLLALLQNNLKRLLGYSSIAHFGYLLVALIASQGLAVEAIGVYLATYVLTSLGAFGVITLMSTPYSGRDADALYEYRGLFWRRPYLTAVLTVMMLSLAGIPLTAGFIGKFYVIAAGVEAQLWWLLGAMVLGSAIGVFYYLRVMVTLFMREPNLHRHDAPFDWGQRAGGIMLLVVALLAFFLGVYPQPLLELVHNAALVALAQ.

14 consecutive transmembrane segments (helical) span residues 13 to 33 (LIAL…MLAI), 43 to 63 (FVLT…AMGV), 82 to 102 (MALV…YLGG), 117 to 137 (LLIL…HLVG), 138 to 158 (LFIG…YAFF), 169 to 189 (YMVL…LLYA), 209 to 229 (LLVE…LSLV), 243 to 263 (PAPV…AVLL), 277 to 297 (LNEL…LLAL), 311 to 331 (IAHF…AVEA), 332 to 352 (IGVY…VITL), 380 to 400 (AVLT…GFIG), 412 to 432 (QLWW…FYYL), and 461 to 481 (IMLL…QPLL).

The protein belongs to the complex I subunit 2 family. NDH-1 is composed of 13 different subunits. Subunits NuoA, H, J, K, L, M, N constitute the membrane sector of the complex.

The protein resides in the cell inner membrane. It catalyses the reaction a quinone + NADH + 5 H(+)(in) = a quinol + NAD(+) + 4 H(+)(out). Functionally, NDH-1 shuttles electrons from NADH, via FMN and iron-sulfur (Fe-S) centers, to quinones in the respiratory chain. The immediate electron acceptor for the enzyme in this species is believed to be ubiquinone. Couples the redox reaction to proton translocation (for every two electrons transferred, four hydrogen ions are translocated across the cytoplasmic membrane), and thus conserves the redox energy in a proton gradient. The protein is NADH-quinone oxidoreductase subunit N of Ectopseudomonas mendocina (strain ymp) (Pseudomonas mendocina).